Reading from the N-terminus, the 310-residue chain is Beta-ketoacyl-[acyl-carrier-protein] synthase III (310 aa).

Residues C112 and H235 contribute to the active site. Positions 236–240 (QANIR) are ACP-binding. The active site involves N265.

Belongs to the thiolase-like superfamily. FabH family. As to quaternary structure, homodimer.

Its subcellular location is the cytoplasm. The catalysed reaction is malonyl-[ACP] + acetyl-CoA + H(+) = 3-oxobutanoyl-[ACP] + CO2 + CoA. Its pathway is lipid metabolism; fatty acid biosynthesis. Functionally, catalyzes the condensation reaction of fatty acid synthesis by the addition to an acyl acceptor of two carbons from malonyl-ACP. Catalyzes the first condensation reaction which initiates fatty acid synthesis and may therefore play a role in governing the total rate of fatty acid production. Possesses both acetoacetyl-ACP synthase and acetyl transacylase activities. Its substrate specificity determines the biosynthesis of branched-chain and/or straight-chain of fatty acids. The protein is Beta-ketoacyl-[acyl-carrier-protein] synthase III of Geobacillus kaustophilus (strain HTA426).